A 210-amino-acid polypeptide reads, in one-letter code: Glutathione S-transferase P (210 aa).

The 80-residue stretch at 2-81 folds into the GST N-terminal domain; the sequence is PPYTVVYFPV…HLGRTLGLYG (80 aa). Tyr4 carries the post-translational modification Phosphotyrosine; by EGFR. Residues Tyr8, Arg14, Trp39, Lys45, and 52-53 each bind glutathione; that span reads QL. Thr62 carries the post-translational modification Phosphothreonine. 65 to 66 provides a ligand contact to glutathione; the sequence is QS. A GST C-terminal domain is found at 83–204; sequence DQQEAALVDM…ASPEYVNLPI (122 aa). Lys103 and Lys116 each carry N6-succinyllysine. The residue at position 128 (Lys128) is an N6-acetyllysine. Phosphotyrosine; by EGFR is present on Tyr199.

Belongs to the GST superfamily. Pi family. In terms of assembly, homodimer. Interacts with CDK5.

Its subcellular location is the cytoplasm. The protein localises to the mitochondrion. It is found in the nucleus. It carries out the reaction RX + glutathione = an S-substituted glutathione + a halide anion + H(+). The catalysed reaction is prostaglandin J2 + glutathione = prostaglandin J2-S-(R)-glutathione. The enzyme catalyses prostaglandin J2 + glutathione = prostaglandin J2-S-(S)-glutathione. It catalyses the reaction prostaglandin A2 + glutathione = prostaglandin A2-S-(S)-glutathione. It carries out the reaction 11(S)-hydroxy-14(S),15(S)-epoxy-(5Z,8Z,12E)-eicosatrienoate + glutathione = (11S,15S)-dihydroxy-14(R)-S-glutathionyl-(5Z,8Z,12E)-eicosatrienoate. Conjugation of reduced glutathione to a wide number of exogenous and endogenous hydrophobic electrophiles. Involved in the formation of glutathione conjugates of both prostaglandin A2 (PGA2) and prostaglandin J2 (PGJ2). Participates in the formation of novel hepoxilin regioisomers. Negatively regulates CDK5 activity via p25/p35 translocation to prevent neurodegeneration. The polypeptide is Glutathione S-transferase P (Homo sapiens (Human)).